The following is a 784-amino-acid chain: Endonuclease MutS2 (784 aa).

ATP is bound at residue 335–342; it reads GPNTGGKT. Positions 527–546 are disordered; the sequence is ERSKKQAEEDEARAHSAREE. In terms of domain architecture, Smr spans 709–784; that stretch reads LDLRGERYED…GTGVTVVELK (76 aa).

The protein belongs to the DNA mismatch repair MutS family. MutS2 subfamily. In terms of assembly, homodimer. Binds to stalled ribosomes, contacting rRNA.

Endonuclease that is involved in the suppression of homologous recombination and thus may have a key role in the control of bacterial genetic diversity. Its function is as follows. Acts as a ribosome collision sensor, splitting the ribosome into its 2 subunits. Detects stalled/collided 70S ribosomes which it binds and splits by an ATP-hydrolysis driven conformational change. Acts upstream of the ribosome quality control system (RQC), a ribosome-associated complex that mediates the extraction of incompletely synthesized nascent chains from stalled ribosomes and their subsequent degradation. Probably generates substrates for RQC. The polypeptide is Endonuclease MutS2 (Geobacillus thermodenitrificans (strain NG80-2)).